The sequence spans 365 residues: Protein BIIDXI (365 aa).

Residues 1–21 (MKEMGVIVLLLLHSFFYVAFC) form the signal peptide. N-linked (GlcNAc...) asparagine glycosylation is found at Asn-48, Asn-121, and Asn-208.

Interacts with PME3. In terms of tissue distribution, mainly expressed in vascular tissues of roots, leaves, stamens and petals.

It localises to the secreted. The protein localises to the cell wall. In terms of biological role, together with At5g11420, acts as a positive regulator of PME3 activity during several developmental processes, including reproductive organ development, hypocotyls elongation, seed germination and endosperm (testa) rupture at the micropyle, probably by modulating the pectin methylation status in cell walls. Involved in the regulation of pectin methylation degree to modulate cell wall physiology during cell separation, hypocotyl growth and embryo development. Required during embryo development, especially to regulate homogalacturonans (HG) methyl esterification in endosperm cell walls, a process related to embryo bending. Also implicated in hypocotyl growth and gravitropic response via the regulation of auxin efflux. Also regulates cell wall pectin upon root-knot nematode Meloidogyne incognita infection. This Arabidopsis thaliana (Mouse-ear cress) protein is Protein BIIDXI.